A 392-amino-acid polypeptide reads, in one-letter code: NADH-quinone oxidoreductase subunit D (392 aa).

Belongs to the complex I 49 kDa subunit family. As to quaternary structure, NDH-1 is composed of 14 different subunits. Subunits NuoB, C, D, E, F, and G constitute the peripheral sector of the complex.

The protein localises to the cell inner membrane. It catalyses the reaction a quinone + NADH + 5 H(+)(in) = a quinol + NAD(+) + 4 H(+)(out). Its function is as follows. NDH-1 shuttles electrons from NADH, via FMN and iron-sulfur (Fe-S) centers, to quinones in the respiratory chain. The immediate electron acceptor for the enzyme in this species is believed to be ubiquinone. Couples the redox reaction to proton translocation (for every two electrons transferred, four hydrogen ions are translocated across the cytoplasmic membrane), and thus conserves the redox energy in a proton gradient. The polypeptide is NADH-quinone oxidoreductase subunit D (Rhodospirillum rubrum (strain ATCC 11170 / ATH 1.1.1 / DSM 467 / LMG 4362 / NCIMB 8255 / S1)).